The following is a 361-amino-acid chain: Chorismate synthase (361 aa).

NADP(+) contacts are provided by arginine 48 and arginine 54. Residues 131–133, 243–244, glycine 287, 302–306, and arginine 328 each bind FMN; these read RSS, NA, and KPTSS.

This sequence belongs to the chorismate synthase family. As to quaternary structure, homotetramer. The cofactor is FMNH2.

The enzyme catalyses 5-O-(1-carboxyvinyl)-3-phosphoshikimate = chorismate + phosphate. It participates in metabolic intermediate biosynthesis; chorismate biosynthesis; chorismate from D-erythrose 4-phosphate and phosphoenolpyruvate: step 7/7. In terms of biological role, catalyzes the anti-1,4-elimination of the C-3 phosphate and the C-6 proR hydrogen from 5-enolpyruvylshikimate-3-phosphate (EPSP) to yield chorismate, which is the branch point compound that serves as the starting substrate for the three terminal pathways of aromatic amino acid biosynthesis. This reaction introduces a second double bond into the aromatic ring system. The sequence is that of Chorismate synthase from Bradyrhizobium sp. (strain BTAi1 / ATCC BAA-1182).